The chain runs to 312 residues: Putative S-adenosyl-L-methionine-dependent methyltransferase BCG_1768c (312 aa).

S-adenosyl-L-methionine is bound by residues Asp-130 and 159 to 160; that span reads DL.

This sequence belongs to the UPF0677 family.

Exhibits S-adenosyl-L-methionine-dependent methyltransferase activity. The protein is Putative S-adenosyl-L-methionine-dependent methyltransferase BCG_1768c of Mycobacterium bovis (strain BCG / Pasteur 1173P2).